The primary structure comprises 258 residues: Aspartate/glutamate leucyltransferase (258 aa).

It belongs to the R-transferase family. Bpt subfamily.

The protein resides in the cytoplasm. The enzyme catalyses N-terminal L-glutamyl-[protein] + L-leucyl-tRNA(Leu) = N-terminal L-leucyl-L-glutamyl-[protein] + tRNA(Leu) + H(+). The catalysed reaction is N-terminal L-aspartyl-[protein] + L-leucyl-tRNA(Leu) = N-terminal L-leucyl-L-aspartyl-[protein] + tRNA(Leu) + H(+). In terms of biological role, functions in the N-end rule pathway of protein degradation where it conjugates Leu from its aminoacyl-tRNA to the N-termini of proteins containing an N-terminal aspartate or glutamate. This is Aspartate/glutamate leucyltransferase from Rhizobium johnstonii (strain DSM 114642 / LMG 32736 / 3841) (Rhizobium leguminosarum bv. viciae).